The primary structure comprises 255 residues: ATP synthase subunit a (255 aa).

Transmembrane regions (helical) follow at residues 40–60, 109–129, 135–155, 163–183, 196–218, and 230–250; these read TEPI…ASEV, LIGG…IPGV, NLNI…YYGL, VAHL…IEVI, LMLN…ALFV, and IVVQ…LATE.

Belongs to the ATPase A chain family. As to quaternary structure, F-type ATPases have 2 components, CF(1) - the catalytic core - and CF(0) - the membrane proton channel. CF(1) has five subunits: alpha(3), beta(3), gamma(1), delta(1), epsilon(1). CF(0) has three main subunits: a(1), b(2) and c(9-12). The alpha and beta chains form an alternating ring which encloses part of the gamma chain. CF(1) is attached to CF(0) by a central stalk formed by the gamma and epsilon chains, while a peripheral stalk is formed by the delta and b chains.

The protein localises to the cell inner membrane. Functionally, key component of the proton channel; it plays a direct role in the translocation of protons across the membrane. This is ATP synthase subunit a from Sorangium cellulosum (strain So ce56) (Polyangium cellulosum (strain So ce56)).